The sequence spans 654 residues: MAPKKPSCLRSLLLPLSLTLLLPQADTRSFIVDRDHDRFLLDGAPFRYVSGSLHYFRVPRVLWADRLLKMRWSGLNAIQFYVPWNYHEPQPGVYNFNGSRDLIAFLNEAALANLLVILRPGPYICAEWEMGGLPSWLLRKPEIRLRTSDPDFLAAVDSWFKVLLPKIYPWLYHNGGNIISIQVENEYGSYGACDFSYMRHLAGLFRALLGEKILLFTTDGPEGLKCGSLQGLYTTVDFGPADNMTKIFTLLRKYEPHGPLVNSEYYTGWLDYWGQNHSTRSVSAVTKGLENMLKLGASVNMYMFHGGTNFGYWNGADKKGRFLSITTSYDYDAPISEAGDPTPKLFALRDVISKFQEVPLGPLPPPSPKMMVGPLTLHLVGHLLAFLDLLCPSGPIRSILPMTFEAVKQDRGFMLYRTYMTHTIFEPTPFWVPNNGVHDRAYVMVDGVFQGVLERNMRDKLFLMGKVGSKLDILVENMGRLSFGSNSSDFKGLLEPPILGQTILTQWMMFPLKIDNLVKWWFLLQLPKWPYPQAPSGPTFYSKTFPILGSVGDTFLHLPGWTKGQVWINGFNLGRYWTKRGPQQTLYVPRFLLFPRGALNKITLLELENVPLQPQVQFLDKPILNSTSTLHRTHINSLSADTLSASEPMELSGH.

Positions 1 to 27 are cleaved as a signal peptide; sequence MAPKKPSCLRSLLLPLSLTLLLPQADT. Residue N97 is glycosylated (N-linked (GlcNAc...) asparagine). E186 (proton donor) is an active-site residue. N243 carries an N-linked (GlcNAc...) asparagine glycan. The Nucleophile role is filled by E264.

It belongs to the glycosyl hydrolase 35 family.

The protein localises to the secreted. In terms of biological role, probable glycosyl hydrolase. The protein is Beta-galactosidase-1-like protein (GLB1L) of Macaca fascicularis (Crab-eating macaque).